The primary structure comprises 188 residues: MTSIDDAPQRSAAHDAVAEVLRGHIRDIPDWPQPGVVFKDITPLLATPTAFGVVIGALADAARALGATTIAGIEARGFLLAAPVADRLGTGLVPIRKQGKLPGPTRSASYDLEYGAATIEIHADAVHDGDRVLLVDDVLATGGTAAAAHSLLAAGGGEVVGLAVLMELSFLPGRDRVAPLDVVSLLTI.

Belongs to the purine/pyrimidine phosphoribosyltransferase family. In terms of assembly, homodimer.

Its subcellular location is the cytoplasm. It catalyses the reaction AMP + diphosphate = 5-phospho-alpha-D-ribose 1-diphosphate + adenine. It participates in purine metabolism; AMP biosynthesis via salvage pathway; AMP from adenine: step 1/1. Catalyzes a salvage reaction resulting in the formation of AMP, that is energically less costly than de novo synthesis. In Frankia casuarinae (strain DSM 45818 / CECT 9043 / HFP020203 / CcI3), this protein is Adenine phosphoribosyltransferase.